The following is a 176-amino-acid chain: 3-hydroxyanthranilate 3,4-dioxygenase (176 aa).

Residue arginine 44 participates in O2 binding. 3 residues coordinate Fe cation: histidine 48, glutamate 54, and histidine 92. Glutamate 54 contributes to the substrate binding site. Substrate contacts are provided by arginine 96 and glutamate 106. Fe cation-binding residues include cysteine 121, cysteine 124, cysteine 158, and cysteine 161.

It belongs to the 3-HAO family. In terms of assembly, homodimer. Fe(2+) is required as a cofactor.

It carries out the reaction 3-hydroxyanthranilate + O2 = (2Z,4Z)-2-amino-3-carboxymuconate 6-semialdehyde. Its pathway is cofactor biosynthesis; NAD(+) biosynthesis; quinolinate from L-kynurenine: step 3/3. In terms of biological role, catalyzes the oxidative ring opening of 3-hydroxyanthranilate to 2-amino-3-carboxymuconate semialdehyde, which spontaneously cyclizes to quinolinate. This chain is 3-hydroxyanthranilate 3,4-dioxygenase, found in Xanthomonas oryzae pv. oryzae (strain MAFF 311018).